We begin with the raw amino-acid sequence, 175 residues long: Ribosome maturation factor RimM (175 aa).

The PRC barrel domain maps to 97-169; it reads EDKFYFHEII…TVRVITPEGL (73 aa).

The protein belongs to the RimM family. Binds ribosomal protein uS19.

It is found in the cytoplasm. An accessory protein needed during the final step in the assembly of 30S ribosomal subunit, possibly for assembly of the head region. Essential for efficient processing of 16S rRNA. May be needed both before and after RbfA during the maturation of 16S rRNA. It has affinity for free ribosomal 30S subunits but not for 70S ribosomes. This Christiangramia forsetii (strain DSM 17595 / CGMCC 1.15422 / KT0803) (Gramella forsetii) protein is Ribosome maturation factor RimM.